The sequence spans 508 residues: Maturase K (508 aa).

The protein belongs to the intron maturase 2 family. MatK subfamily.

It localises to the plastid. Its subcellular location is the chloroplast. Functionally, usually encoded in the trnK tRNA gene intron. Probably assists in splicing its own and other chloroplast group II introns. In Lupinus cosentinii (West Australian blue lupine), this protein is Maturase K.